Reading from the N-terminus, the 452-residue chain is F-box only protein 47 (452 aa).

An F-box domain is found at 41-91; sequence FGNFKALPLEIFQIILKYLSVKDISMLSMVSKTVSQHIINYISTSSGSKRL.

As to quaternary structure, part of a SCF (SKP1-cullin-F-box) protein ligase complex. As to expression, widely expressed, with highest levels in kidney, liver and pancreas. Down-regulated in tumors.

Functionally, probably recognizes and binds to some phosphorylated proteins and promotes their ubiquitination and degradation. The protein is F-box only protein 47 of Homo sapiens (Human).